The chain runs to 345 residues: MTSKVQLVFLFLFLCVMWASPSAASCDEPSDPMMKQFEEWMAEYGRVYKDNDEKMLRFQIFKNNVNHIETFNNRNGNSYTLGINQFTDMTNNEFVAQYTGLSLPLNIKREPVVSFDDVDISSVPQSIDWRDSGAVTSVKNQGRCGSCWAFASIATVESIYKIKRGNLVSLSEQQVLDCAVSYGCKGGWINKAYSFIISNKGVASAAIYPYKAAKGTCKTNGVPNSAYITRYTYVQRNNERNMMYAVSNQPIAAALDASGNFQHYKRGVFTGPCGTRLNHAIVIIGYGQDSSGKKFWIVRNSWGAGWGEGGYIRLARDVSSSFGLCGIAMDPLYPTLQSGPSVEVI.

The N-terminal stretch at 1–24 (MTSKVQLVFLFLFLCVMWASPSAA) is a signal peptide. The propeptide at 25-122 (SCDEPSDPMM…VSFDDVDISS (98 aa)) is activation peptide. Disulfide bonds link Cys144–Cys184, Cys178–Cys217, and Cys273–Cys325. Residue Cys147 is part of the active site. Cys147 contributes to the E64 binding site. Catalysis depends on residues His279 and Asn300.

Stem (at protein level).

It catalyses the reaction Hydrolysis of proteins with broad specificity for peptide bonds. Best reported small molecule substrate Bz-Phe-Val-Arg-|-NHMec, but broader specificity than fruit bromelain.. With respect to regulation, strongly inhibited by chicken egg-white cystatin. Inhibited by iodoacetamide and the active-site-directed inhibitor E64 (L-trans-epoxysuccinyl-leucylamide-(4-guanido)-butane). Its function is as follows. Cysteine protease. Displays a high level of diversity in substrate specificity at the P1-P1' cleavage site. A hydrophilic P1 residue is preferred, with Gln or Arg strongly preferred. Favors an Ile/Leu residue at the P2 position of substrates, with an overall higher preference for Leu. The optimal tripeptide for cleavage is Pro-Leu-Gln, with cleavage occurring after the Gln residue. Another optimal tripeptide is Val-Leu-Arg, which may imply that a hydrophobic residue at the P3 position of substrates is preferred. This chain is Ananain, found in Ananas comosus (Pineapple).